A 138-amino-acid polypeptide reads, in one-letter code: Acidic phospholipase A2 VP7 (138 aa).

The signal sequence occupies residues 1–16; sequence MRTLWIVAVCLMGVEG. 7 cysteine pairs are disulfide-bonded: C42–C131, C44–C60, C59–C111, C65–C138, C66–C104, C73–C97, and C91–C102. 3 residues coordinate Ca(2+): Y43, G45, and G47. H63 is an active-site residue. Ca(2+) is bound at residue D64. The active site involves D105.

The protein belongs to the phospholipase A2 family. Group II subfamily. D49 sub-subfamily. In terms of assembly, does not form a complex. Ca(2+) serves as cofactor. In terms of tissue distribution, expressed by the venom gland.

Its subcellular location is the secreted. The enzyme catalyses a 1,2-diacyl-sn-glycero-3-phosphocholine + H2O = a 1-acyl-sn-glycero-3-phosphocholine + a fatty acid + H(+). In terms of biological role, snake venom phospholipase A2 (PLA2) that is not toxic by itself, but the synergistical mixture of a basic and this acidic protein is lethal. PLA2 catalyzes the calcium-dependent hydrolysis of the 2-acyl groups in 3-sn-phosphoglycerides. This Daboia palaestinae (Palestine viper) protein is Acidic phospholipase A2 VP7.